We begin with the raw amino-acid sequence, 212 residues long: tRNA (guanine-N(7)-)-methyltransferase (212 aa).

Residues E44, D69, D96, and D118 each contribute to the S-adenosyl-L-methionine site. D118 is an active-site residue. K122 is a binding site for substrate. Residues 124–129 (RHEKRR) are interaction with RNA. Substrate contacts are provided by residues D154 and 191-194 (TEYE).

Belongs to the class I-like SAM-binding methyltransferase superfamily. TrmB family.

The catalysed reaction is guanosine(46) in tRNA + S-adenosyl-L-methionine = N(7)-methylguanosine(46) in tRNA + S-adenosyl-L-homocysteine. It participates in tRNA modification; N(7)-methylguanine-tRNA biosynthesis. Catalyzes the formation of N(7)-methylguanine at position 46 (m7G46) in tRNA. This is tRNA (guanine-N(7)-)-methyltransferase from Streptococcus sanguinis (strain SK36).